Consider the following 475-residue polypeptide: Chromosomal replication initiator protein DnaA (475 aa).

A domain I, interacts with DnaA modulators region spans residues 1 to 73; it reads MSDTEQERWS…LSCWQAELPD (73 aa). The tract at residues 73-131 is domain II; that stretch reads DVHRIDLTVRSAMRCAAPVREAPATDARHPERSEGRNGVELKTVATAPASANHDALGGS. The segment at 132–354 is domain III, AAA+ region; it reads PLDPRLTFQS…GAINRLLAHS (223 aa). The ATP site is built by Gly179, Gly181, Lys182, and Thr183. The segment at 355–475 is domain IV, binds dsDNA; the sequence is KLNAQPVTLE…VELLKRQLQE (121 aa).

It belongs to the DnaA family. In terms of assembly, oligomerizes as a right-handed, spiral filament on DNA at oriC.

It localises to the cytoplasm. In terms of biological role, plays an essential role in the initiation and regulation of chromosomal replication. ATP-DnaA binds to the origin of replication (oriC) to initiate formation of the DNA replication initiation complex once per cell cycle. Binds the DnaA box (a 9 base pair repeat at the origin) and separates the double-stranded (ds)DNA. Forms a right-handed helical filament on oriC DNA; dsDNA binds to the exterior of the filament while single-stranded (ss)DNA is stabiized in the filament's interior. The ATP-DnaA-oriC complex binds and stabilizes one strand of the AT-rich DNA unwinding element (DUE), permitting loading of DNA polymerase. After initiation quickly degrades to an ADP-DnaA complex that is not apt for DNA replication. Binds acidic phospholipids. The polypeptide is Chromosomal replication initiator protein DnaA (Nitrobacter winogradskyi (strain ATCC 25391 / DSM 10237 / CIP 104748 / NCIMB 11846 / Nb-255)).